Here is a 171-residue protein sequence, read N- to C-terminus: Non-specific lipid transfer protein GPI-anchored 19 (171 aa).

The first 18 residues, 1-18, serve as a signal peptide directing secretion; sequence MILAILALVIATFLYGGA. Intrachain disulfides connect cysteine 25-cysteine 66, cysteine 35-cysteine 50, cysteine 51-cysteine 93, and cysteine 64-cysteine 103. Asparagine 72 and asparagine 82 each carry an N-linked (GlcNAc...) asparagine glycan. Residues 113–149 form a disordered region; it reads LPANTPVGSPRSAPSPSGTTSPANTPSGSKKFPLSNE. Residues 118–141 show a composition bias toward low complexity; sequence PVGSPRSAPSPSGTTSPANTPSGS. Residue serine 147 is the site of GPI-anchor amidated serine attachment. Asparagine 148 is a glycosylation site (N-linked (GlcNAc...) asparagine). A propeptide spans 148–171 (removed in mature form); it reads NESSSKSNVIILSFVSIALVLAII.

This sequence belongs to the plant LTP family.

It is found in the cell membrane. Probable lipid transfer protein. This is Non-specific lipid transfer protein GPI-anchored 19 from Arabidopsis thaliana (Mouse-ear cress).